The sequence spans 255 residues: MSNNYTSLSSSLDEEMGLKAGHEIDLEGSPPSEHNSEEKSTLPSNSDILTSANPVSQASETPDHSIESNTGSTQSPTSHSLLLKFSFCIVYYFYFAIVVLGCVLPFEHTHTFLIAFLVIFGIISVILFSGSIYYYETWTKTVKHFLKKVISPFKKEYIVCAFLKTFVFYGLLKTIEHFLVLLSGDKWGWKCSTLSSILTPVSCISFCLNESVQLRSCSTHLFINTVAWIKSLGGGKNAFENNYNQLNETSPEDLV.

Residues 19–78 (KAGHEIDLEGSPPSEHNSEEKSTLPSNSDILTSANPVSQASETPDHSIESNTGSTQSPTS) form a disordered region. 2 stretches are compositionally biased toward polar residues: residues 41-60 (TLPS…QASE) and 67-78 (ESNTGSTQSPTS). Transmembrane regions (helical) follow at residues 85–105 (FSFC…CVLP), 112–132 (FLIA…SGSI), and 162–182 (FLKT…LVLL).

Belongs to the WTF family.

It is found in the spore membrane. Functionally, may act in meiotic drive. The sequence is that of Wtf element wtf15 from Schizosaccharomyces kambucha (Fission yeast).